We begin with the raw amino-acid sequence, 480 residues long: Ribosomal RNA small subunit methyltransferase F (480 aa).

Residues 126-132 (AAAPGSK), glutamate 150, aspartate 177, and aspartate 195 contribute to the S-adenosyl-L-methionine site. Cysteine 248 (nucleophile) is an active-site residue.

This sequence belongs to the class I-like SAM-binding methyltransferase superfamily. RsmB/NOP family.

It is found in the cytoplasm. The catalysed reaction is cytidine(1407) in 16S rRNA + S-adenosyl-L-methionine = 5-methylcytidine(1407) in 16S rRNA + S-adenosyl-L-homocysteine + H(+). Specifically methylates the cytosine at position 1407 (m5C1407) of 16S rRNA. In Cronobacter sakazakii (strain ATCC BAA-894) (Enterobacter sakazakii), this protein is Ribosomal RNA small subunit methyltransferase F.